The sequence spans 277 residues: 4-hydroxy-tetrahydrodipicolinate reductase (277 aa).

NAD(+)-binding positions include 10 to 15 (GAGGRM) and Glu-36. Arg-37 contributes to the NADP(+) binding site. NAD(+) contacts are provided by residues 100–102 (GTT) and 124–127 (SGNM). Residue His-158 is the Proton donor/acceptor of the active site. Residue His-159 participates in (S)-2,3,4,5-tetrahydrodipicolinate binding. Lys-162 (proton donor) is an active-site residue. Residue 168–169 (GT) participates in (S)-2,3,4,5-tetrahydrodipicolinate binding.

This sequence belongs to the DapB family.

The protein localises to the cytoplasm. It catalyses the reaction (S)-2,3,4,5-tetrahydrodipicolinate + NAD(+) + H2O = (2S,4S)-4-hydroxy-2,3,4,5-tetrahydrodipicolinate + NADH + H(+). It carries out the reaction (S)-2,3,4,5-tetrahydrodipicolinate + NADP(+) + H2O = (2S,4S)-4-hydroxy-2,3,4,5-tetrahydrodipicolinate + NADPH + H(+). The protein operates within amino-acid biosynthesis; L-lysine biosynthesis via DAP pathway; (S)-tetrahydrodipicolinate from L-aspartate: step 4/4. Functionally, catalyzes the conversion of 4-hydroxy-tetrahydrodipicolinate (HTPA) to tetrahydrodipicolinate. This is 4-hydroxy-tetrahydrodipicolinate reductase from Chelativorans sp. (strain BNC1).